Consider the following 365-residue polypeptide: MASTSAASNELVSSTINTILPTLVDGLDLNQRQSHDFFQQVLQGNIDPALMASVLTALKIKGETPEEIAGAAIAIRAAATPFPERNKEDIVADCVGTGGDGANTINISTTAAVLAAACGLKMAKHGNRSVSSMSGSADLLEAFGVNLSMSPETANHCLAQTNLCFLYAPAYHSGFKYAGPVRKAMGIRTLFNILGPLVNPAKPNIMLLGVYTPELLMPMAQALQLTGVKRAFVVHGSGLDEIALHGNTQAIEINNGELIERTISPQDFGLKNYTLEEIKGGTPAENADIIRDILSGQGKDAHNAAVIVNCAALLYLHDKAESLTQAAQLATEVLASGKGLSTLLTLVKLSNQDVSSTQTELKADK.

5-phospho-alpha-D-ribose 1-diphosphate-binding positions include glycine 96, 99-100 (GD), threonine 104, 106-109 (NIST), 124-132 (KHGNRSVSS), and serine 136. Glycine 96 is an anthranilate binding site. Mg(2+) is bound at residue serine 108. Position 127 (asparagine 127) interacts with anthranilate. Arginine 182 contacts anthranilate. Mg(2+)-binding residues include aspartate 240 and glutamate 241.

This sequence belongs to the anthranilate phosphoribosyltransferase family. As to quaternary structure, homodimer. The cofactor is Mg(2+).

It catalyses the reaction N-(5-phospho-beta-D-ribosyl)anthranilate + diphosphate = 5-phospho-alpha-D-ribose 1-diphosphate + anthranilate. It functions in the pathway amino-acid biosynthesis; L-tryptophan biosynthesis; L-tryptophan from chorismate: step 2/5. Its function is as follows. Catalyzes the transfer of the phosphoribosyl group of 5-phosphorylribose-1-pyrophosphate (PRPP) to anthranilate to yield N-(5'-phosphoribosyl)-anthranilate (PRA). The protein is Anthranilate phosphoribosyltransferase of Colwellia psychrerythraea (strain 34H / ATCC BAA-681) (Vibrio psychroerythus).